The primary structure comprises 102 residues: Small ribosomal subunit protein uS14 (102 aa).

Belongs to the universal ribosomal protein uS14 family. In terms of assembly, part of the 30S ribosomal subunit. Contacts proteins S3 and S10.

In terms of biological role, binds 16S rRNA, required for the assembly of 30S particles and may also be responsible for determining the conformation of the 16S rRNA at the A site. The sequence is that of Small ribosomal subunit protein uS14 from Wolbachia pipientis wMel.